Here is a 758-residue protein sequence, read N- to C-terminus: 5-methyltetrahydropteroyltriglutamate--homocysteine methyltransferase (758 aa).

Residues R16–K19 and K112 contribute to the 5-methyltetrahydropteroyltri-L-glutamate site. Residues I433–S435 and E486 each bind L-homocysteine. Residues I433–S435 and E486 each bind L-methionine. 5-methyltetrahydropteroyltri-L-glutamate is bound by residues R517–C518 and W563. L-homocysteine is bound at residue D601. An L-methionine-binding site is contributed by D601. E607 serves as a coordination point for 5-methyltetrahydropteroyltri-L-glutamate. Zn(2+) is bound by residues H643, C645, and E667. H696 acts as the Proton donor in catalysis. Position 728 (C728) interacts with Zn(2+).

Belongs to the vitamin-B12 independent methionine synthase family. It depends on Zn(2+) as a cofactor.

It catalyses the reaction 5-methyltetrahydropteroyltri-L-glutamate + L-homocysteine = tetrahydropteroyltri-L-glutamate + L-methionine. It functions in the pathway amino-acid biosynthesis; L-methionine biosynthesis via de novo pathway; L-methionine from L-homocysteine (MetE route): step 1/1. Functionally, catalyzes the transfer of a methyl group from 5-methyltetrahydrofolate to homocysteine resulting in methionine formation. The polypeptide is 5-methyltetrahydropteroyltriglutamate--homocysteine methyltransferase (Neisseria meningitidis serogroup C (strain 053442)).